Consider the following 1173-residue polypeptide: Alpha-mannosidase 2 (1173 aa).

Positions 1–21 are disordered; the sequence is MPFSSYIGNSRRSSTGGGTGG. The Cytoplasmic portion of the chain corresponds to 1-50; it reads MPFSSYIGNSRRSSTGGGTGGWGQSLLPTALSKSKLAINRKPRKRTLVVN. Residues 51–71 form a helical; Signal-anchor membrane-spanning segment; sequence FIFANFFVIALTVSLLFFLLT. The Lumenal portion of the chain corresponds to 72 to 1173; that stretch reads LFHFGVPGPI…AYKLELRPHK (1102 aa). An N-linked (GlcNAc...) asparagine glycan is attached at Asn-106. His-162 and Asp-164 together coordinate Zn(2+). Asn-262 carries N-linked (GlcNAc...) asparagine glycosylation. A Zn(2+)-binding site is contributed by Asp-276. The active-site Nucleophile is the Asp-276. A glycan (N-linked (GlcNAc...) asparagine) is linked at Asn-467. His-564 contacts Zn(2+). N-linked (GlcNAc...) asparagine glycosylation is found at Asn-675, Asn-772, Asn-782, Asn-991, Asn-1098, and Asn-1108.

It belongs to the glycosyl hydrolase 38 family. In terms of assembly, homodimer; disulfide-linked. Interacts with GALT1. Zn(2+) is required as a cofactor. Glycosylated.

It is found in the golgi apparatus membrane. It carries out the reaction N(4)-{beta-D-GlcNAc-(1-&gt;2)-alpha-D-Man-(1-&gt;3)-[alpha-D-Man-(1-&gt;3)-[alpha-D-Man-(1-&gt;6)]-alpha-D-Man-(1-&gt;6)]-beta-D-Man-(1-&gt;4)-beta-D-GlcNAc-(1-&gt;4)-beta-D-GlcNAc}-L-asparaginyl-[protein] + 2 H2O = 2 alpha-D-mannopyranose + an N(4)-{beta-D-GlcNAc-(1-&gt;2)-alpha-D-Man-(1-&gt;3)-[alpha-D-Man-(1-&gt;6)]-beta-D-Man-(1-&gt;4)-beta-D-GlcNAc-(1-&gt;4)-beta-D-GlcNAc}-L-asparaginyl-[protein]. The protein operates within protein modification; protein glycosylation. Its activity is regulated as follows. Inhibited by 1 mM Cu(2+) and by the class II alpha-mannosidase inhibitor swainsonine. Its function is as follows. Catalyzes the first committed step in the biosynthesis of complex N-glycans. It controls conversion of high mannose to complex N-glycans; the final hydrolytic step in the N-glycan maturation pathway. Converts GlcNAcMan(5)GlcNAc(2) (Man5Gn) into GlcNAcMan(3)GlcNAc(2) (MGn) by sequential removal of two alpha1,6- and alpha1,3-linked mannose residues from the alpha1,6-mannose branch of the substrate. To a lesser extent, also able to cleave beta1,2-xylosylated Man5Gn-glycopeptide (Man5GnX-GP) and pyridylaminated substrates Man5Gn-PA and Man5GnX-PA, but not active toward Man5-glycopeptide. Required for resistance to salt stress. The polypeptide is Alpha-mannosidase 2 (Arabidopsis thaliana (Mouse-ear cress)).